We begin with the raw amino-acid sequence, 316 residues long: Thymidylate synthase (316 aa).

DUMP contacts are provided by residues Arg-23 and 178–179 (RR). Catalysis depends on Cys-198, which acts as the Nucleophile. Residues 218 to 221 (RSGD), Asn-229, and 259 to 261 (HIY) each bind dUMP. Asp-221 contacts (6R)-5,10-methylene-5,6,7,8-tetrahydrofolate. Residue Ala-315 participates in (6R)-5,10-methylene-5,6,7,8-tetrahydrofolate binding.

Belongs to the thymidylate synthase family. Bacterial-type ThyA subfamily. In terms of assembly, homodimer.

The protein localises to the cytoplasm. It catalyses the reaction dUMP + (6R)-5,10-methylene-5,6,7,8-tetrahydrofolate = 7,8-dihydrofolate + dTMP. The protein operates within pyrimidine metabolism; dTTP biosynthesis. Catalyzes the reductive methylation of 2'-deoxyuridine-5'-monophosphate (dUMP) to 2'-deoxythymidine-5'-monophosphate (dTMP) while utilizing 5,10-methylenetetrahydrofolate (mTHF) as the methyl donor and reductant in the reaction, yielding dihydrofolate (DHF) as a by-product. This enzymatic reaction provides an intracellular de novo source of dTMP, an essential precursor for DNA biosynthesis. This chain is Thymidylate synthase, found in Pediococcus pentosaceus (strain ATCC 25745 / CCUG 21536 / LMG 10740 / 183-1w).